The primary structure comprises 778 residues: Dapper homolog 1 (778 aa).

Composition is skewed to basic and acidic residues over residues 1 to 10 (MKPDAAREPE) and 18 to 40 (AEAE…TRER). Residues 1–40 (MKPDAAREPEPLSPGRGAEAEGRWRERGEADTERQRTRER) form a disordered region. Residues 85–149 (DAAQRSRLEE…SEEHLETDSR (65 aa)) are required for self-association. A coiled-coil region spans residues 85–149 (DAAQRSRLEE…SEEHLETDSR (65 aa)). The Nuclear export signal signature appears at 125 to 134 (LDKQISDLRL). Disordered regions lie at residues 305 to 324 (KTHP…DPTK), 359 to 386 (GGIT…QLES), 397 to 416 (AGAA…KAAS), 428 to 468 (ESMK…SQKN), 544 to 616 (EKPR…HKRT), and 694 to 721 (NCFG…SEES). The span at 375-386 (RSKDSKTDQLES) shows a compositional bias: basic and acidic residues. Residues 432-443 (ESNQASAVSPKT) are compositionally biased toward polar residues. Residues 551-564 (KKCRFPDDSDTNKK) carry the Bipartite nuclear localization signal motif. The segment covering 554–563 (RFPDDSDTNK) has biased composition (basic and acidic residues). Residues 564–574 (KFRKTSAKGRR) show a composition bias toward basic residues. Positions 694 to 704 (NCFGDSESSVS) are enriched in polar residues. The PDZ-binding motif lies at 768–778 (RSGSLKLMTTV). Ser769 is modified (phosphoserine; by PKA).

The protein belongs to the dapper family. Can form homodimers and heterodimers with DACT2 or DACT3. Interacts with CSNK1D, PKA catalytic subunit, PKC-type kinase, CSNK2A1, CSNK2B, DVL1, DLV2, DVAL3, VANGL1, VANGL2, CTNND1 and HDAC1. Interacts with GSK3B; the interaction is indicative for an association of DACT1 with the beta-catenin destruction complex. Interacts with GSK3A. Interacts with YWHAB; the interaction is enhanced by PKA phosphorylating DACT1 at Ser-769. Interacts with CTNNB1. In terms of tissue distribution, expressed in multiple tissues including brain, heart, kidney, liver and testis.

It localises to the cytoplasm. It is found in the nucleus. Its subcellular location is the synapse. Involved in regulation of intracellular signaling pathways during development. Specifically thought to play a role in canonical and/or non-canonical Wnt signaling pathways through interaction with DSH (Dishevelled) family proteins. The activation/inhibition of Wnt signaling may depend on the phosphorylation status. Proposed to regulate the degradation of CTNNB1/beta-catenin, thereby modulating the transcriptional activation of target genes of the Wnt signaling pathway. Its function in stabilizing CTNNB1 may involve inhibition of GSK3B activity. Promotes the membrane localization of CTNNB1. The cytoplasmic form can induce DVL2 degradation via a lysosome-dependent mechanism; the function is inhibited by PKA-induced binding to 14-3-3 proteins, such as YWHAB. Seems to be involved in morphogenesis at the primitive streak by regulating VANGL2 and DVL2; the function seems to be independent of canonical Wnt signaling and rather involves the non-canonical Wnt/planar cell polarity (PCP) pathway. The nuclear form may prevent the formation of LEF1:CTNNB1 complex and recruit HDAC1 to LEF1 at target gene promoters to repress transcription thus antagonizing Wnt signaling. May be involved in positive regulation of fat cell differentiation. During neuronal differentiation may be involved in excitatory synapse organization, and dendrite formation and establishment of spines. This Mus musculus (Mouse) protein is Dapper homolog 1 (Dact1).